The chain runs to 91 residues: Putative membrane protein insertion efficiency factor (91 aa).

Residues 72 to 91 are disordered; the sequence is SGGNDPVPEKLTHINHQHEK. A compositionally biased stretch (basic and acidic residues) spans 78–91; sequence VPEKLTHINHQHEK.

The protein belongs to the UPF0161 family.

It is found in the cell inner membrane. Functionally, could be involved in insertion of integral membrane proteins into the membrane. The polypeptide is Putative membrane protein insertion efficiency factor (Pseudoalteromonas translucida (strain TAC 125)).